We begin with the raw amino-acid sequence, 396 residues long: MAKEKFARTKPHVNIGTIGHVDHGKTTLTAAITKVMAAAGRAEFRAYDQIDGAPEERERGITISTAHVEYETEARHYAHVDCPGHADYVKNMITGAAQMDGGILVVSAADGPMPQTREHILLARQVGVPALVVFLNKVDQVDDEELLELVEMEVRELLSSYDFPGDDIPVIKGSALKALEGEESEMGVDAINRLMDAVDAYIPEPERPLDQAFLMPIEDVFTISGRGTVVTGRIERGIVKVGEQVAIIGIKDTVVTTCTGVEMFRKLLDQGQAGDNVGVLLRGTKREDVQRGQVLAAPNSIKPHTKFNAESYILTKEEGGRHTPFFSNYRPQFYFRTTDVTGVLKLPEGVEMVMPGDNITMEVELIAPIAMEKGLRFAIREGGRTVGAGVVAEVID.

The tr-type G domain maps to 10–206; the sequence is KPHVNIGTIG…AVDAYIPEPE (197 aa). The tract at residues 19–26 is G1; sequence GHVDHGKT. 19–26 contacts GTP; it reads GHVDHGKT. Threonine 26 is a binding site for Mg(2+). Residues 60-64 form a G2 region; that stretch reads GITIS. The interval 81 to 84 is G3; sequence DCPG. Residues 81–85 and 136–139 contribute to the GTP site; these read DCPGH and NKVD. Residues 136-139 form a G4 region; sequence NKVD. Positions 174 to 176 are G5; sequence SAL.

This sequence belongs to the TRAFAC class translation factor GTPase superfamily. Classic translation factor GTPase family. EF-Tu/EF-1A subfamily. As to quaternary structure, monomer.

It localises to the cytoplasm. It catalyses the reaction GTP + H2O = GDP + phosphate + H(+). Functionally, GTP hydrolase that promotes the GTP-dependent binding of aminoacyl-tRNA to the A-site of ribosomes during protein biosynthesis. This Magnetococcus marinus (strain ATCC BAA-1437 / JCM 17883 / MC-1) protein is Elongation factor Tu.